An 869-amino-acid polypeptide reads, in one-letter code: Probable beta-glucosidase F (869 aa).

The N-terminal stretch at 1 to 19 is a signal peptide; the sequence is MRVLSAIALVASLASSALS. N-linked (GlcNAc...) asparagine glycosylation is found at Asn77 and Asn261. The active site involves Asp289. Residues Asn332, Asn364, Asn399, and Asn478 are each glycosylated (N-linked (GlcNAc...) asparagine). The disordered stretch occupies residues 677–697; that stretch reads STYPPTRPPKGPTPTYPTAIP. Positions 681–691 are enriched in pro residues; the sequence is PTRPPKGPTPT. Asn728 carries N-linked (GlcNAc...) asparagine glycosylation.

It belongs to the glycosyl hydrolase 3 family.

It is found in the secreted. The catalysed reaction is Hydrolysis of terminal, non-reducing beta-D-glucosyl residues with release of beta-D-glucose.. It participates in glycan metabolism; cellulose degradation. Its function is as follows. Beta-glucosidases are one of a number of cellulolytic enzymes involved in the degradation of cellulosic biomass. Catalyzes the last step releasing glucose from the inhibitory cellobiose. This chain is Probable beta-glucosidase F (bglF), found in Aspergillus fumigatus (strain ATCC MYA-4609 / CBS 101355 / FGSC A1100 / Af293) (Neosartorya fumigata).